Consider the following 355-residue polypeptide: Histidinol-phosphate aminotransferase (355 aa).

The residue at position 211 (Lys211) is an N6-(pyridoxal phosphate)lysine.

It belongs to the class-II pyridoxal-phosphate-dependent aminotransferase family. Histidinol-phosphate aminotransferase subfamily. Homodimer. Requires pyridoxal 5'-phosphate as cofactor.

The enzyme catalyses L-histidinol phosphate + 2-oxoglutarate = 3-(imidazol-4-yl)-2-oxopropyl phosphate + L-glutamate. It participates in amino-acid biosynthesis; L-histidine biosynthesis; L-histidine from 5-phospho-alpha-D-ribose 1-diphosphate: step 7/9. In Aeromonas salmonicida (strain A449), this protein is Histidinol-phosphate aminotransferase.